Here is a 555-residue protein sequence, read N- to C-terminus: Transcriptional adapter 2b (555 aa).

The ZZ-type zinc finger occupies 8–63 (FTKYNCTNCQDDIQGIRVHCAECENFDLCLQCFAAGAEIGAHQNNHSYQFMDTGTS). Residues Cys-13, Cys-16, Cys-27, Cys-30, Cys-36, Cys-39, His-49, and His-53 each contribute to the Zn(2+) site. An SANT domain is found at 69-121 (RGKGAWTAREEIRLLDAIEQYGFGNWEDISKHIETKSAEDAKEEYVNKFVNGT). The tract at residues 318-372 (THRSTGPYGHGKTDHTHTSNGSHRPPSSSLHSPQPNLRKVEMSSGGEASSNSIAP) is disordered. The span at 339–352 (SHRPPSSSLHSPQP) shows a compositional bias: low complexity. A compositionally biased stretch (polar residues) spans 363–372 (GEASSNSIAP).

In terms of assembly, component of histone acetyltransferase complexes containing Gcn5 and Ada3. Can heterooligomerize with Isoform A. Component of the Spt-Ada-Gcn5 acetyltransferase (SAGA) complex consisting of Ada1, Ada2b (Isoform B), Ada3, wda, Saf6, Spt3, Spt7, Spt20, Taf9, Taf10b, Taf12, Nipped-A/Tra1, Sf3b3, Sf3b5, not/nonstop, Sgf11, Sgf29, e(y)2, Atxn7 and Gcn5. Taf5 and Taf10, which has partially redundant properties with Taf10b, may also be part of this complex. Interacts (via C-terminus) with Spt3 and Taf12; the interactions are direct. Interacts with Ada3; the interaction is probably direct. May also interact directly with Spt7 and Gcn5. Interacts with p53. As to quaternary structure, can heterooligomerize with Isoform B. Component of the Chiffon histone acetyltransferase (CHAT) complex consisting of Ada3, Sgf29, Gcn5, chif/chiffon and Ada2b (Isoform A). Interacts (via N-terminus) with Gcn5 and Ada3; the interaction is direct. Can interact directly with Spt7 in vitro but in vivo this interaction is not stable probably due to the absence of other SAGA components. Interacts with p53. In terms of tissue distribution, expressed in nurse cells of stage 10 egg chambers and transcripts are dumped into the oocyte when nurse cells degenerate at late oogenesis.

It is found in the nucleus. Component of several Gcn5-containing histone acetyltransferase complexes that regulate nucleosome organization; involved in acetylation of histone H3, particularly on Lys-10 (H3K9ac) and Lys-15 (H3K14ac). Regulates the transcription of a subset of genes during development; affects recruitment of RNA polymerase II. May be involved in the function of some acidic activation domains, which activate transcription at distant sites. Involved in the p53-dependent apoptosis pathway response to DNA damage by genotoxic agents. Functionally, component of the SAGA histone acetyltransferase complex, which predominantly acetylates histone H3. In terms of biological role, component of the CHAT histone acetyltransferase complex, which predominantly acetylates histone H3. This is Transcriptional adapter 2b from Drosophila melanogaster (Fruit fly).